The sequence spans 119 residues: Dihydroneopterin aldolase (119 aa).

Residues Glu21, Tyr53, and 72 to 73 (ID) contribute to the substrate site. Catalysis depends on Lys99, which acts as the Proton donor/acceptor.

The protein belongs to the DHNA family.

It catalyses the reaction 7,8-dihydroneopterin = 6-hydroxymethyl-7,8-dihydropterin + glycolaldehyde. It participates in cofactor biosynthesis; tetrahydrofolate biosynthesis; 2-amino-4-hydroxy-6-hydroxymethyl-7,8-dihydropteridine diphosphate from 7,8-dihydroneopterin triphosphate: step 3/4. In terms of biological role, catalyzes the conversion of 7,8-dihydroneopterin to 6-hydroxymethyl-7,8-dihydropterin. The sequence is that of Dihydroneopterin aldolase (folB) from Streptococcus pyogenes.